We begin with the raw amino-acid sequence, 375 residues long: Cinnamyl alcohol dehydrogenase 3 (375 aa).

Position 44 (Cys44) interacts with Zn(2+). Residue Ser46 participates in NADP(+) binding. Residues His66, Glu67, Cys97, Cys100, Cys103, Cys111, and Cys160 each contribute to the Zn(2+) site. Residues Thr164, 186–191 (GLGGLG), 209–214 (SRSSEK), Thr249, Gly273, and 296–298 (SQI) contribute to the NADP(+) site.

Belongs to the zinc-containing alcohol dehydrogenase family. Homodimer. Zn(2+) is required as a cofactor. In terms of tissue distribution, expressed in the root tips. Expressed in the apical meristematic regions, leaf veins and at the base of the trichomes. Expressed at the base of the stems. Expressed in the abscission zones of newly formed siliques.

The catalysed reaction is (E)-cinnamyl alcohol + NADP(+) = (E)-cinnamaldehyde + NADPH + H(+). It carries out the reaction (E)-coniferol + NADP(+) = (E)-coniferaldehyde + NADPH + H(+). It catalyses the reaction (E)-sinapyl alcohol + NADP(+) = (E)-sinapaldehyde + NADPH + H(+). The enzyme catalyses (E)-4-coumaroyl alcohol + NADP(+) = (E)-4-coumaraldehyde + NADPH + H(+). The catalysed reaction is (E)-caffeyl alcohol + NADP(+) = (E)-caffeyl aldehyde + NADPH + H(+). The protein operates within aromatic compound metabolism; phenylpropanoid biosynthesis. In terms of biological role, involved in lignin biosynthesis. Catalyzes the final step specific for the production of lignin monomers. Catalyzes the NADPH-dependent reduction of coniferaldehyde, 5-hydroxyconiferaldehyde, sinapaldehyde, 4-coumaraldehyde and caffeyl aldehyde to their respective alcohols. The sequence is that of Cinnamyl alcohol dehydrogenase 3 from Arabidopsis thaliana (Mouse-ear cress).